Here is a 983-residue protein sequence, read N- to C-terminus: MTVENAKALFFERNLCALTPLDPERASAFLADLEARAREEELAGVVALLGRKKAADFLSAILDLSPFIREALTRQPRILDRIVSATPESALEAILDEISASGTVAGVSESELMTSLRQLKREAHVLIALCDLARIFNTETTTDRLTDLAEACTGAAVRFLLLDADAAGRINLPDRSNPEKDCGWIVLGMGKFGARELNYSSDIDLIVFIDETKPAIGDPYECVDTFSRLTRRLVRILQDRTGDGYVFRVDLRLRPDPGSTPLAIPVGAALHYYEGRGQNWERAAMIKARPVAGDRLSGKQILAELSPYVWRKYLDYAAIADVHSIKRQIHAHKGHGDIAVRGHNVKLGRGGIREIEFFVQTQQLIAGGRFPELRGNQTVPMLARLAERGWITQQARDALAQEYWFLRDVEHRIQMIVDEQTHILPEDDEGFARVSHMMGYADPAEFSEIFLAALKVVEKQYAALFAQAPELGAASGNLVFTGDVDDPGTLETLSAMGYERSSDICRVIRTWHFGRYRATQSAEARERLTELTPALLKAFAETRRADESLRRFDGFLQGLPAGIQLFSLLQSNPRLLNLLVMIMSAAPRLADIITRNPHVFDGLLDPAIFSEVPTRAYLEERLRAFLGSATDFEEVLDRLRIFAAEHRFLIGIRLLTGAINGVRAGQAFSDLAELMVGRALEAVEAELQRRHGKVKGAKVALLAMGKLGSRELTAGSDVDLILLYDHDKDAEESDGEKPLAPSQYYIRLTQRLIAALSAPTAEGVLYEVDMRLRPSGNKGPVATHIEAFGKYQRNDAWTWEHMALTRARPIHGDEAFIARIKVDIEDVLAMPRDVRKLAGDVREMRELIAQEKPPRDDWDLKLKPGGIIDLEFIAQFATLAGYVKKTPRPFATEEVLANLDPFFADPAMVDGLVEAHRFYTNLSQAIRLCLNDSAGLDQFPPGMRELLCRVAGLPDIERIEYELLEHYRLVRAAFDKLVGHGAD.

Residues 1 to 468 (MTVENAKALF…KQYAALFAQA (468 aa)) form an adenylyl removase region. The adenylyl transferase stretch occupies residues 473 to 983 (AASGNLVFTG…FDKLVGHGAD (511 aa)).

Belongs to the GlnE family. Mg(2+) serves as cofactor.

The catalysed reaction is [glutamine synthetase]-O(4)-(5'-adenylyl)-L-tyrosine + phosphate = [glutamine synthetase]-L-tyrosine + ADP. The enzyme catalyses [glutamine synthetase]-L-tyrosine + ATP = [glutamine synthetase]-O(4)-(5'-adenylyl)-L-tyrosine + diphosphate. Its function is as follows. Involved in the regulation of glutamine synthetase GlnA, a key enzyme in the process to assimilate ammonia. When cellular nitrogen levels are high, the C-terminal adenylyl transferase (AT) inactivates GlnA by covalent transfer of an adenylyl group from ATP to specific tyrosine residue of GlnA, thus reducing its activity. Conversely, when nitrogen levels are low, the N-terminal adenylyl removase (AR) activates GlnA by removing the adenylyl group by phosphorolysis, increasing its activity. The regulatory region of GlnE binds the signal transduction protein PII (GlnB) which indicates the nitrogen status of the cell. The sequence is that of Bifunctional glutamine synthetase adenylyltransferase/adenylyl-removing enzyme from Brucella suis biovar 1 (strain 1330).